The primary structure comprises 127 residues: Modulator protein MzrA (127 aa).

Over 1-10 (MGLQNMTLRR) the chain is Cytoplasmic. Residues 11 to 31 (FTLSMSALLLLCALLWLWAAL) traverse the membrane as a helical segment. Over 32 to 127 (EQQESSLAIR…RLRDAPHRLG (96 aa)) the chain is Periplasmic.

This sequence belongs to the MzrA family. Interacts with EnvZ.

It localises to the cell inner membrane. Functionally, modulates the activity of the EnvZ/OmpR two-component regulatory system, probably by directly modulating EnvZ enzymatic activity and increasing stability of phosphorylated OmpR. The protein is Modulator protein MzrA of Enterobacter lignolyticus (strain SCF1).